A 309-amino-acid chain; its full sequence is Wnt inhibitor of Dorsal protein (309 aa).

The N-terminal stretch at 1-16 is a signal peptide; sequence MIFAITFFMGITSTLA. 10 disulfides stabilise this stretch: C51–C62, C102–C110, C112–C121, C162–C179, C164–C174, C232–C269, C248–C262, C266–C308, C284–C299, and C286–C296.

This sequence belongs to the Wnt family.

Its subcellular location is the secreted. The protein resides in the extracellular space. It is found in the extracellular matrix. Its function is as follows. Binds as a ligand to a family of frizzled seven-transmembrane receptors and acts through a cascade of genes on the nucleus. The polypeptide is Wnt inhibitor of Dorsal protein (wntD) (Drosophila melanogaster (Fruit fly)).